Here is a 291-residue protein sequence, read N- to C-terminus: 33 kDa chaperonin (291 aa).

2 disulfides stabilise this stretch: Cys237/Cys239 and Cys270/Cys273.

Belongs to the HSP33 family. Under oxidizing conditions two disulfide bonds are formed involving the reactive cysteines. Under reducing conditions zinc is bound to the reactive cysteines and the protein is inactive.

It is found in the cytoplasm. In terms of biological role, redox regulated molecular chaperone. Protects both thermally unfolding and oxidatively damaged proteins from irreversible aggregation. Plays an important role in the bacterial defense system toward oxidative stress. The protein is 33 kDa chaperonin of Bacillus cytotoxicus (strain DSM 22905 / CIP 110041 / 391-98 / NVH 391-98).